Consider the following 965-residue polypeptide: Aminopeptidase N (965 aa).

Over Met1–Ser8 the chain is Cytoplasmic. The helical; Signal-anchor for type II membrane protein transmembrane segment at Lys9–Val32 threads the bilayer. The cytosolic Ser/Thr-rich junction stretch occupies residues Tyr33–Ser65. The Extracellular portion of the chain corresponds to Tyr33–Ser965. Residues Asn40–Ser65 are disordered. Residues Gly44–Thr61 are compositionally biased toward low complexity. The interval Lys66–Ser965 is metalloprotease. Asn125 carries N-linked (GlcNAc...) asparagine glycosylation. Tyr173 carries the sulfotyrosine modification. Residues Asn231, Asn260, and Asn316 are each glycosylated (N-linked (GlcNAc...) asparagine). Gly349–Asn353 contributes to the substrate binding site. Zn(2+) is bound at residue His385. The Proton acceptor role is filled by Glu386. Zn(2+) is bound by residues His389 and Glu408. At Tyr416 the chain carries Sulfotyrosine. N-linked (GlcNAc...) asparagine glycosylation is found at Asn508, Asn569, Asn624, Asn680, Asn734, and Asn738. Cystine bridges form between Cys760-Cys767 and Cys797-Cys833.

The protein belongs to the peptidase M1 family. As to quaternary structure, homodimer. Interacts with SLC6A19. The cofactor is Zn(2+). Post-translationally, sulfated. N- and O-glycosylated. In terms of processing, may undergo proteolysis and give rise to a soluble form.

The protein resides in the cell membrane. The catalysed reaction is Release of an N-terminal amino acid, Xaa-|-Yaa- from a peptide, amide or arylamide. Xaa is preferably Ala, but may be most amino acids including Pro (slow action). When a terminal hydrophobic residue is followed by a prolyl residue, the two may be released as an intact Xaa-Pro dipeptide.. Functionally, broad specificity aminopeptidase which plays a role in the final digestion of peptides generated from hydrolysis of proteins by gastric and pancreatic proteases. Also involved in the processing of various peptides including peptide hormones, such as angiotensin III and IV, neuropeptides, and chemokines. May also be involved the cleavage of peptides bound to major histocompatibility complex class II molecules of antigen presenting cells. May have a role in angiogenesis and promote cholesterol crystallization. May have a role in amino acid transport by acting as binding partner of amino acid transporter SLC6A19 and regulating its activity. The protein is Aminopeptidase N (ANPEP) of Bos taurus (Bovine).